The chain runs to 162 residues: Probable chemoreceptor glutamine deamidase CheD (162 aa).

It belongs to the CheD family.

It catalyses the reaction L-glutaminyl-[protein] + H2O = L-glutamyl-[protein] + NH4(+). In terms of biological role, probably deamidates glutamine residues to glutamate on methyl-accepting chemotaxis receptors (MCPs), playing an important role in chemotaxis. In Pyrococcus horikoshii (strain ATCC 700860 / DSM 12428 / JCM 9974 / NBRC 100139 / OT-3), this protein is Probable chemoreceptor glutamine deamidase CheD.